The primary structure comprises 146 residues: Large ribosomal subunit protein uL15 (146 aa).

A compositionally biased stretch (basic and acidic residues) spans 1–13; sequence MKLHELKPAEGSR. The interval 1–47 is disordered; the sequence is MKLHELKPAEGSRKSRKRIGRGTGSGLGRNAGKGEKGQKARAGGGVR. The segment covering 21–31 has biased composition (gly residues); that stretch reads RGTGSGLGRNA.

This sequence belongs to the universal ribosomal protein uL15 family. As to quaternary structure, part of the 50S ribosomal subunit.

Its function is as follows. Binds to the 23S rRNA. This chain is Large ribosomal subunit protein uL15, found in Clostridium kluyveri (strain NBRC 12016).